The chain runs to 469 residues: ATP sulfurylase 4, chloroplastic (469 aa).

Residues 1–51 (MASSAAAIVSGSPFRSSPLIHNHHASRYAPGSISVVSLPRQVSRRGLSVKS) constitute a chloroplast transit peptide.

It belongs to the sulfate adenylyltransferase family. As to quaternary structure, homotetramer. As to expression, expressed in roots and leaves.

It is found in the plastid. The protein localises to the chloroplast stroma. The catalysed reaction is sulfate + ATP + H(+) = adenosine 5'-phosphosulfate + diphosphate. The protein operates within sulfur metabolism; hydrogen sulfide biosynthesis; sulfite from sulfate: step 1/3. In terms of biological role, sulfate adenylyltransferase. Catalyzes the first step of the sulfate assimilation pathway. The chain is ATP sulfurylase 4, chloroplastic (APS4) from Arabidopsis thaliana (Mouse-ear cress).